Here is a 424-residue protein sequence, read N- to C-terminus: Dihydrolipoyllysine-residue succinyltransferase component of 2-oxoglutarate dehydrogenase complex (424 aa).

Residues 1–76 (MPEVKVPELA…EVGQAIAVVG (76 aa)) enclose the Lipoyl-binding domain. K42 bears the N6-lipoyllysine mark. Disordered stretches follow at residues 76 to 138 (GEGS…KYAR) and 155 to 204 (VRKE…RKKT). Positions 91–105 (EAPKQETETSTDDKS) are enriched in basic and acidic residues. Positions 122 to 131 (DNNQRVNATP) are enriched in polar residues. The Peripheral subunit-binding (PSBD) domain maps to 128-164 (NATPSARKYAREKGIDLSEIAAASNDVVRKEHVDQSQ). The segment covering 162–176 (QSQTQTSTQQQAQPA) has biased composition (low complexity). Catalysis depends on residues H395 and D399.

It belongs to the 2-oxoacid dehydrogenase family. Forms a 24-polypeptide structural core with octahedral symmetry. Part of the 2-oxoglutarate dehydrogenase (OGDH) complex composed of E1 (2-oxoglutarate dehydrogenase), E2 (dihydrolipoamide succinyltransferase) and E3 (dihydrolipoamide dehydrogenase); the complex contains multiple copies of the three enzymatic components (E1, E2 and E3). Requires (R)-lipoate as cofactor.

The catalysed reaction is N(6)-[(R)-dihydrolipoyl]-L-lysyl-[protein] + succinyl-CoA = N(6)-[(R)-S(8)-succinyldihydrolipoyl]-L-lysyl-[protein] + CoA. Its pathway is amino-acid degradation; L-lysine degradation via saccharopine pathway; glutaryl-CoA from L-lysine: step 6/6. In terms of biological role, E2 component of the 2-oxoglutarate dehydrogenase (OGDH) complex which catalyzes the second step in the conversion of 2-oxoglutarate to succinyl-CoA and CO(2). The polypeptide is Dihydrolipoyllysine-residue succinyltransferase component of 2-oxoglutarate dehydrogenase complex (odhB) (Staphylococcus saprophyticus subsp. saprophyticus (strain ATCC 15305 / DSM 20229 / NCIMB 8711 / NCTC 7292 / S-41)).